The chain runs to 236 residues: UPF0257 lipoprotein YnfC (236 aa).

A signal peptide spans 1-16 (MKKPLLLTLLCMILAG). C17 carries the N-palmitoyl cysteine lipid modification. C17 carries S-diacylglycerol cysteine lipidation.

The protein belongs to the UPF0257 family.

It localises to the cell membrane. The chain is UPF0257 lipoprotein YnfC from Salmonella schwarzengrund (strain CVM19633).